Consider the following 480-residue polypeptide: Sensor histidine kinase CusS (480 aa).

Residues methionine 1–arginine 15 lie on the Cytoplasmic side of the membrane. The chain crosses the membrane as a helical span at residues leucine 16 to isoleucine 36. Residues histidine 37–lysine 186 are Periplasmic-facing. Residues leucine 187–histidine 207 form a helical membrane-spanning segment. The region spanning lysine 208–threonine 260 is the HAMP domain. The Cytoplasmic segment spans residues lysine 208–alanine 480. One can recognise a Histidine kinase domain in the interval aspartate 268–alanine 480. Histidine 271 is subject to Phosphohistidine; by autocatalysis.

In terms of processing, autophosphorylated.

The protein localises to the cell inner membrane. The catalysed reaction is ATP + protein L-histidine = ADP + protein N-phospho-L-histidine.. In terms of biological role, member of the two-component regulatory system CusS/CusR involved in response to copper and silver. Acts as a copper/silver ion sensor. Activates CusR by phosphorylation. The polypeptide is Sensor histidine kinase CusS (cusS) (Escherichia coli (strain K12)).